The sequence spans 439 residues: Protein dumpy-20 (439 aa).

The interval 93–116 is disordered; sequence GTLSDPSLHGSNSSSSTSDVGSSV. The segment covering 96–116 has biased composition (low complexity); sequence SDPSLHGSNSSSSTSDVGSSV. 2 consecutive BED-type zinc fingers follow at residues 135–184 and 349–398; these read PTEN…YQKV and KTEH…YNDV. Residues Cys154, Cys157, His172, His177, Cys368, Cys371, His386, and His391 each coordinate Zn(2+).

Its function is as follows. Involved in cuticle function and is essential for normal morphological development. The chain is Protein dumpy-20 (dpy-20) from Caenorhabditis briggsae.